An 876-amino-acid chain; its full sequence is MESQRMTWLYDRHHSLKHNKAERQAILSTYRLAKRPNLSSEGMIGESCIVRTNCFSVHLESLDDQTIYEYDVCVTPEVGINRAVIRELVKQQKDSGLGGRLPAYDGRKRLYTSGPLPFDSHRFLVLLDSIEDSPEESRHLRVRDFVVTLKFAAKISLWTLRKFRGGKPNRESRAALRALDVVLKELPTARYTQFAGSFYSPNLGECRQLCKVLESWRGFHQRIQATQMGLQLNIDVSSSVFIKPVPVVDYVAQLLNEDILLDRPLCSTEFLKIKEALEGLKVQINGILFNTYHVQDLVHQAASFPVNFSIQYPSLPCLKVAHFGETIFLPLEVCKIAEGQCHQKQLNAKHMAALLQVARQPPNERDYNILQTVHQNKYQEDPHAKEFGIKIEEKLVSIKSRILPAPWLKFHDSGETTEFLPQLGIWNMMHKKMINGGRVKSWACVNFCWSVREYAARNFCYDLGFMCRESGMVFSVKPVLPLVIAKPGCVESALRTLHDDVMDILRPQGRKLDLLIVILPNNNGSLYGDVKRICETDIGLISQCCLAKHVLKMNKWYLASVALKINAKMGGRNTVLVDALEMRLPHVRDTPTIVFGAHVTHPHPGKANSSSIAAVVASQDWPEVTKYAGLISVQACHQESIQGLFKVQDDPERGTTTSGMIKEHLMSFYRATKRKPGRIIFYRDGVSKGQLPQALMHELGAIKMACASMGPDYNPLVTYVVLQKCRHTRLFADYYNANTHDSTANIRAGTVVDSNICQPNQFDFYLCSHRSTQGTKRPRYYHVLWDENDFLAGSFQELTNYLCYTSATCTQSISVVAPVHYARLLSSRARCYIKPRSIGDSTSHTSLPSEEDSSAASETGSLLPIKDNLKGAMFFC.

Residues 246–338 form the PAZ domain; sequence PVVDYVAQLL…LPLEVCKIAE (93 aa). The Piwi domain maps to 514–834; sequence LLIVILPNNN…LSSRARCYIK (321 aa). Residues 839 to 859 form a disordered region; sequence GDSTSHTSLPSEEDSSAASET.

The protein belongs to the argonaute family. Ago subfamily.

Its function is as follows. Probably involved in the RNA silencing pathway. May bind to short RNAs such as microRNAs (miRNAs) or short interfering RNAs (siRNAs), and represses the translation of mRNAs which are complementary to them. In Oryza sativa subsp. japonica (Rice), this protein is Protein argonaute 17 (AGO17).